We begin with the raw amino-acid sequence, 803 residues long: Subtilisin-like protease SBT5.5 (803 aa).

Positions 1–22 (MKRIFGIFIFLSLLLFLVPLLA) are cleaved as a signal peptide. Positions 23 to 112 (SCTKEKQVYI…KSDPRKYKIH (90 aa)) are cleaved as a propeptide — activation peptide. Residues 30 to 108 (VYIVYFGEHK…VSVFKSDPRK (79 aa)) enclose the Inhibitor I9 domain. The Peptidase S8 domain maps to 140-656 (KYDVNDRFRV…SRHFRPTKAA (517 aa)). The active-site Charge relay system is the Asp169. Residue Asn202 is glycosylated (N-linked (GlcNAc...) asparagine). His244 (charge relay system) is an active-site residue. In terms of domain architecture, PA spans 409–504 (YAPLVYAPDV…VFSSTVDRIL (96 aa)). Catalysis depends on Ser589, which acts as the Charge relay system. N-linked (GlcNAc...) asparagine glycosylation is present at Asn725.

The protein belongs to the peptidase S8 family.

It localises to the secreted. In Arabidopsis thaliana (Mouse-ear cress), this protein is Subtilisin-like protease SBT5.5.